The following is a 436-amino-acid chain: 5-methylthioadenosine/S-adenosylhomocysteine deaminase (436 aa).

The Zn(2+) site is built by histidine 66 and histidine 68. Substrate is bound by residues glutamate 95, arginine 147, arginine 161, and histidine 187. Zn(2+) is bound at residue histidine 214. The substrate site is built by glutamate 217 and aspartate 303. Zn(2+) is bound at residue aspartate 303.

Belongs to the metallo-dependent hydrolases superfamily. MTA/SAH deaminase family. Zn(2+) is required as a cofactor.

It carries out the reaction S-adenosyl-L-homocysteine + H2O + H(+) = S-inosyl-L-homocysteine + NH4(+). The enzyme catalyses S-methyl-5'-thioadenosine + H2O + H(+) = S-methyl-5'-thioinosine + NH4(+). Catalyzes the deamination of 5-methylthioadenosine and S-adenosyl-L-homocysteine into 5-methylthioinosine and S-inosyl-L-homocysteine, respectively. Is also able to deaminate adenosine. The polypeptide is 5-methylthioadenosine/S-adenosylhomocysteine deaminase (Symbiobacterium thermophilum (strain DSM 24528 / JCM 14929 / IAM 14863 / T)).